A 152-amino-acid polypeptide reads, in one-letter code: Large ribosomal subunit protein bL21 (152 aa).

Residues 115–152 (VTSISNGEKPKKATTSAKPNTKKPSTAVKSSKVEKTPE) are disordered. Residues 127–143 (ATTSAKPNTKKPSTAVK) are compositionally biased toward polar residues.

This sequence belongs to the bacterial ribosomal protein bL21 family. As to quaternary structure, part of the 50S ribosomal subunit. Contacts protein L20.

In terms of biological role, this protein binds to 23S rRNA in the presence of protein L20. This is Large ribosomal subunit protein bL21 from Prochlorococcus marinus (strain SARG / CCMP1375 / SS120).